The chain runs to 468 residues: Glutamate--tRNA ligase 2 (468 aa).

Residues 9–19 (PSPTGHLHIGG) carry the 'HIGH' region motif. Zn(2+) contacts are provided by Cys98, Cys100, Cys125, and His127. The 'KMSKS' region motif lies at 236 to 240 (RLSKR). ATP is bound at residue Lys239.

The protein belongs to the class-I aminoacyl-tRNA synthetase family. Glutamate--tRNA ligase type 1 subfamily. As to quaternary structure, monomer. Zn(2+) is required as a cofactor.

It is found in the cytoplasm. The catalysed reaction is tRNA(Glu) + L-glutamate + ATP = L-glutamyl-tRNA(Glu) + AMP + diphosphate. Catalyzes the attachment of glutamate to tRNA(Glu) in a two-step reaction: glutamate is first activated by ATP to form Glu-AMP and then transferred to the acceptor end of tRNA(Glu). The polypeptide is Glutamate--tRNA ligase 2 (Methylococcus capsulatus (strain ATCC 33009 / NCIMB 11132 / Bath)).